The chain runs to 302 residues: MTKKKGIDIIGVPSTFGQRKLGVDLGPTAIRYAGLIPRLKQLDLDVNDKGDIKVSAVDIEKFQSEQNGLRNYDEIIDVTQKLNKEVSASIENNRFPLVLGGDHSIAIGSVSAISKHYNNLGVIWYDAHGDLNIPEESPSGNIHGMPLRILTGEGPKELLELNSNVIKPENIVLIGMRDLDKGERQFIKDHNIKTFTMSDIDKLGIKEVIENTIEYLKSRNVDGVHLSLDVDALDPLETPGTGTRVLGGLTYRESHFALELLHQSQSVTSMDLVEVNPLIDHNNHTAEQSVSLVGTFFGETLL.

Positions 103, 126, 128, and 130 each coordinate Mn(2+). Residues 128 to 132 (HGDLN), 139 to 141 (SGN), and Asp180 each bind substrate. Residues Asp229 and Asp231 each coordinate Mn(2+). Substrate contacts are provided by Thr243 and Glu274.

This sequence belongs to the arginase family. Requires Mn(2+) as cofactor.

The catalysed reaction is L-arginine + H2O = urea + L-ornithine. It functions in the pathway nitrogen metabolism; urea cycle; L-ornithine and urea from L-arginine: step 1/1. This Staphylococcus aureus (strain MRSA252) protein is Arginase (arg).